A 445-amino-acid polypeptide reads, in one-letter code: ATP synthase subunit b-delta (445 aa).

Residues 1–168 form an ATP synthase subunit b region; it reads MSIFIGQLIG…PSSAVLEAGA (168 aa). The chain crosses the membrane as a helical span at residues 3 to 23; the sequence is IFIGQLIGFAVIVFILVKWVV. The ATP synthase subunit delta stretch occupies residues 169-445; the sequence is SLNLRAASRE…LAAARTGLPD (277 aa).

In the N-terminal section; belongs to the ATPase B chain family. This sequence in the C-terminal section; belongs to the ATPase delta chain family. As to quaternary structure, F-type ATPases have 2 components, F(1) - the catalytic core - and F(0) - the membrane proton channel. F(1) has five subunits: alpha(3), beta(3), gamma(1), delta(1), epsilon(1). F(0) has three main subunits: a(1), b(2) and c(10-14). The alpha and beta chains form an alternating ring which encloses part of the gamma chain. F(1) is attached to F(0) by a central stalk formed by the gamma and epsilon chains, while a peripheral stalk is formed by the delta and b chains.

It is found in the cell membrane. F(1)F(0) ATP synthase produces ATP from ADP in the presence of a proton or sodium gradient. F-type ATPases consist of two structural domains, F(1) containing the extramembraneous catalytic core and F(0) containing the membrane proton channel, linked together by a central stalk and a peripheral stalk. During catalysis, ATP synthesis in the catalytic domain of F(1) is coupled via a rotary mechanism of the central stalk subunits to proton translocation. Functionally, this fusion protein includes a component of the F(0) channel (subunit b) and of the F(1) subunit (subunit delta). Two copies of subunit b and one of delta together form the peripheral 'stator' stalk which links F(1) to F(0). In Mycolicibacterium vanbaalenii (strain DSM 7251 / JCM 13017 / BCRC 16820 / KCTC 9966 / NRRL B-24157 / PYR-1) (Mycobacterium vanbaalenii), this protein is ATP synthase subunit b-delta (atpFH).